The primary structure comprises 369 residues: MAKRDYYDVLGISKSASQDEIKKAYRSLAKKYHPDVSKEKDAETKFKEVQEAYDVLNDSNKKAQYDRFGHAGTGQDPFGGAGGGFGGFGGFDDIISQFFGGGQTRRTRQTSNVGEDLNMRMTIDFMEAVLGTTKNVSVDITQDCGHCHGSGAESSKDVHTCSKCHGQGFINVDQRTMFGTMRSQQVCPQCQGEGQTIDNKCHVCSGAGRVKAKKTVDVKVPAGVDNEMTLRVPGYGNGGRKGAESGDLYITFRVKPHKIFKRRGSDIILDVPITFTQAALGDKIDIPTIYGEVELTIPAGIQSGTELKLKNKGTKDPRTGKTGDQHVIVNIETPKNLSSEEKKLFEQLSKLDSPRKKSGWDKFKSFFTN.

Residues 5–69 enclose the J domain; it reads DYYDVLGISK…NKKAQYDRFG (65 aa). A CR-type zinc finger spans residues 131–213; it reads GTTKNVSVDI…CSGAGRVKAK (83 aa). Residues Cys144, Cys147, Cys161, Cys164, Cys187, Cys190, Cys201, and Cys204 each contribute to the Zn(2+) site. CXXCXGXG motif repeat units follow at residues 144 to 151, 161 to 168, 187 to 194, and 201 to 208; these read CGHCHGSG, CSKCHGQG, CPQCQGEG, and CHVCSGAG.

The protein belongs to the DnaJ family. As to quaternary structure, homodimer. Requires Zn(2+) as cofactor.

The protein localises to the cytoplasm. Its function is as follows. Participates actively in the response to hyperosmotic and heat shock by preventing the aggregation of stress-denatured proteins and by disaggregating proteins, also in an autonomous, DnaK-independent fashion. Unfolded proteins bind initially to DnaJ; upon interaction with the DnaJ-bound protein, DnaK hydrolyzes its bound ATP, resulting in the formation of a stable complex. GrpE releases ADP from DnaK; ATP binding to DnaK triggers the release of the substrate protein, thus completing the reaction cycle. Several rounds of ATP-dependent interactions between DnaJ, DnaK and GrpE are required for fully efficient folding. Also involved, together with DnaK and GrpE, in the DNA replication of plasmids through activation of initiation proteins. This Acholeplasma laidlawii protein is Chaperone protein DnaJ.